Consider the following 578-residue polypeptide: Proline--tRNA ligase (578 aa).

It belongs to the class-II aminoacyl-tRNA synthetase family. ProS type 1 subfamily. As to quaternary structure, homodimer.

The protein localises to the cytoplasm. The catalysed reaction is tRNA(Pro) + L-proline + ATP = L-prolyl-tRNA(Pro) + AMP + diphosphate. In terms of biological role, catalyzes the attachment of proline to tRNA(Pro) in a two-step reaction: proline is first activated by ATP to form Pro-AMP and then transferred to the acceptor end of tRNA(Pro). As ProRS can inadvertently accommodate and process non-cognate amino acids such as alanine and cysteine, to avoid such errors it has two additional distinct editing activities against alanine. One activity is designated as 'pretransfer' editing and involves the tRNA(Pro)-independent hydrolysis of activated Ala-AMP. The other activity is designated 'posttransfer' editing and involves deacylation of mischarged Ala-tRNA(Pro). The misacylated Cys-tRNA(Pro) is not edited by ProRS. The protein is Proline--tRNA ligase of Burkholderia pseudomallei (strain K96243).